We begin with the raw amino-acid sequence, 222 residues long: Beta-casein (222 aa).

The signal sequence occupies residues methionine 1–alanine 15. Threonine 27 carries the post-translational modification Phosphothreonine. 4 positions are modified to phosphoserine: serine 30, serine 32, serine 33, and serine 34.

This sequence belongs to the beta-casein family. Mammary gland specific. Secreted in milk.

The protein resides in the secreted. Important role in determination of the surface properties of the casein micelles. This is Beta-casein (CSN2) from Capra hircus (Goat).